A 346-amino-acid chain; its full sequence is Flap endonuclease 1 (346 aa).

Residues Met1 to Arg102 form an N-domain region. Residues Asp31, Asp84, Glu156, Glu158, Asp177, Asp179, and Asp239 each coordinate Mg(2+). An I-domain region spans residues Asp120–Gly261.

It belongs to the XPG/RAD2 endonuclease family. FEN1 subfamily. As to quaternary structure, interacts with PCNA. PCNA stimulates the nuclease activity without altering cleavage specificity. Requires Mg(2+) as cofactor.

In terms of biological role, structure-specific nuclease with 5'-flap endonuclease and 5'-3' exonuclease activities involved in DNA replication and repair. During DNA replication, cleaves the 5'-overhanging flap structure that is generated by displacement synthesis when DNA polymerase encounters the 5'-end of a downstream Okazaki fragment. Binds the unpaired 3'-DNA end and kinks the DNA to facilitate 5' cleavage specificity. Cleaves one nucleotide into the double-stranded DNA from the junction in flap DNA, leaving a nick for ligation. Also involved in the base excision repair (BER) pathway. Acts as a genome stabilization factor that prevents flaps from equilibrating into structures that lead to duplications and deletions. Also possesses 5'-3' exonuclease activity on nicked or gapped double-stranded DNA. The protein is Flap endonuclease 1 of Pyrobaculum aerophilum (strain ATCC 51768 / DSM 7523 / JCM 9630 / CIP 104966 / NBRC 100827 / IM2).